The primary structure comprises 197 residues: MSSSLPLHPLLDNGISQGKPNFPGGKLYCHCASNKVEITLTSDVLHNHACGCSKCWKPKGSIFSVVGVVPTSALSVTANASKLAIIDKNAPIQRYACKECGVHLYGRIEVEHPFKGLDFVHVELSEGGGKEGWQGVQFAGFVSSLIGQGLDPELVPGVRERLKSLGLENYDALSPPLMDAIATWNAKRDGVVFRSSL.

A CENP-V/GFA domain is found at 22 to 171 (FPGGKLYCHC…LKSLGLENYD (150 aa)). Cys29, Cys31, Cys50, Cys52, Cys55, Cys97, and Cys100 together coordinate Zn(2+).

Belongs to the Gfa family. Zn(2+) is required as a cofactor.

It catalyses the reaction S-(hydroxymethyl)glutathione = glutathione + formaldehyde. The protein operates within one-carbon metabolism; formaldehyde degradation; formate from formaldehyde (glutathione route): step 1/3. Catalyzes the condensation of formaldehyde and glutathione to S-hydroxymethylglutathione. This is Putative glutathione-dependent formaldehyde-activating enzyme from Emericella nidulans (strain FGSC A4 / ATCC 38163 / CBS 112.46 / NRRL 194 / M139) (Aspergillus nidulans).